A 96-amino-acid chain; its full sequence is Co-chaperonin GroES (96 aa).

This sequence belongs to the GroES chaperonin family. In terms of assembly, heptamer of 7 subunits arranged in a ring. Interacts with the chaperonin GroEL.

The protein localises to the cytoplasm. In terms of biological role, together with the chaperonin GroEL, plays an essential role in assisting protein folding. The GroEL-GroES system forms a nano-cage that allows encapsulation of the non-native substrate proteins and provides a physical environment optimized to promote and accelerate protein folding. GroES binds to the apical surface of the GroEL ring, thereby capping the opening of the GroEL channel. The polypeptide is Co-chaperonin GroES (Polaromonas sp. (strain JS666 / ATCC BAA-500)).